Reading from the N-terminus, the 230-residue chain is MSSVLQGFTKSLAMTFVSEIGDKTFFAAAILAMRYPRRLVLAGCLSALIVMTILSATLGWAAPNLISRKWTHHITTLLFFGFGLWSLWDGFKEGGGGSEELAEVEAELDADLKANGKSPKDSSKREDENKKQNRAFLTQFFSPIFLKAFSINFFGEWGDKSQLATIGLAADENPFGVVLGGVVAQFLCTTAAVIGGKSLASQISERIVALSGGMLFIIFGIQSYLTSVEA.

6 helical membrane-spanning segments follow: residues L12 to A32, L39 to G59, T71 to F91, A135 to G155, F175 to G195, and I207 to S227.

It belongs to the GDT1 family.

It is found in the membrane. In Arabidopsis thaliana (Mouse-ear cress), this protein is GDT1-like protein 4.